Here is a 385-residue protein sequence, read N- to C-terminus: S-adenosylmethionine synthase (385 aa).

An ATP-binding site is contributed by His-15. Asp-17 is a Mg(2+) binding site. Glu-43 is a K(+) binding site. The L-methionine site is built by Glu-56 and Gln-99. Residues 99-109 are flexible loop; it reads QSPDINKGINN. Residues 164–166, 230–231, Asp-239, 245–246, Ala-262, and Lys-266 each bind ATP; these read DAK, RF, and RK. Asp-239 lines the L-methionine pocket. Lys-270 contacts L-methionine.

The protein belongs to the AdoMet synthase family. As to quaternary structure, homotetramer; dimer of dimers. It depends on Mg(2+) as a cofactor. K(+) is required as a cofactor.

Its subcellular location is the cytoplasm. It catalyses the reaction L-methionine + ATP + H2O = S-adenosyl-L-methionine + phosphate + diphosphate. The protein operates within amino-acid biosynthesis; S-adenosyl-L-methionine biosynthesis; S-adenosyl-L-methionine from L-methionine: step 1/1. Functionally, catalyzes the formation of S-adenosylmethionine (AdoMet) from methionine and ATP. The overall synthetic reaction is composed of two sequential steps, AdoMet formation and the subsequent tripolyphosphate hydrolysis which occurs prior to release of AdoMet from the enzyme. The sequence is that of S-adenosylmethionine synthase from Baumannia cicadellinicola subsp. Homalodisca coagulata.